The primary structure comprises 674 residues: DNA mismatch repair protein MutL (674 aa).

The protein belongs to the DNA mismatch repair MutL/HexB family.

Its function is as follows. This protein is involved in the repair of mismatches in DNA. It is required for dam-dependent methyl-directed DNA mismatch repair. May act as a 'molecular matchmaker', a protein that promotes the formation of a stable complex between two or more DNA-binding proteins in an ATP-dependent manner without itself being part of a final effector complex. This chain is DNA mismatch repair protein MutL, found in Clostridium perfringens (strain 13 / Type A).